Reading from the N-terminus, the 460-residue chain is ATP synthase subunit beta (460 aa).

150 to 157 is an ATP binding site; the sequence is GGAGVGKT.

This sequence belongs to the ATPase alpha/beta chains family. F-type ATPases have 2 components, CF(1) - the catalytic core - and CF(0) - the membrane proton channel. CF(1) has five subunits: alpha(3), beta(3), gamma(1), delta(1), epsilon(1). CF(0) has three main subunits: a(1), b(2) and c(9-12). The alpha and beta chains form an alternating ring which encloses part of the gamma chain. CF(1) is attached to CF(0) by a central stalk formed by the gamma and epsilon chains, while a peripheral stalk is formed by the delta and b chains.

It localises to the cell inner membrane. It catalyses the reaction ATP + H2O + 4 H(+)(in) = ADP + phosphate + 5 H(+)(out). Functionally, produces ATP from ADP in the presence of a proton gradient across the membrane. The catalytic sites are hosted primarily by the beta subunits. This is ATP synthase subunit beta from Shigella dysenteriae serotype 1 (strain Sd197).